We begin with the raw amino-acid sequence, 204 residues long: Peptide chain release factor homolog (204 aa).

The segment at 2–98 (ILLQLSSAQG…KNWFLGIGRF (97 aa)) is rRNA-recognition domain, N-terminus. Residues 99-107 (TADEQEQSD) are linker 1. The tract at residues 108 to 161 (AIRYETLRSSGPGGQHVNKTDSAVRATHLASGISVKVQSERSQHANKRLARLLI) is GGQ domain. The short motif at 120 to 122 (GGQ) is the GGQ motif element. The segment at 162-179 (AWKLEQQQQENSAALKSQ) is linker 2. An rRNA-recognition domain, C-terminus region spans residues 180 to 204 (RRMFHHQIERGNPRRTFTGMAFIEG).

It belongs to the prokaryotic/mitochondrial release factor family. As to quaternary structure, found in the A site of damaged 70S ribosomes, but not in undamaged ribosomes. Contacts (damaged) 16S rRNA, 23S rRNA and ribosomal protein uS12, but not mRNA.

In terms of biological role, peptide chain release-like factor that acts on 70S ribosomes with specific damage to their decoding center (cleavage of 16S rRNA between adenine-1493 and guanosine-1494, E.coli 16S rRNA numbering). Probably acts as a peptidyl-tRNA hydrolase, allowing release of the nascent chain and dissociation of the 30S and 50S subunits. Can release mRNA as short as 19 nucleotides (nt, mRNA-19, which has a single amino acid in the P-site and only a single nt in the A-site) from the ribosome. This specific cleavage is inflicted by CdiA (ECL_04451) or by colicin E3-type (ColE3) proteins. In vivo the PrfH-RtcB2 pair restores growth in the presence of ribotoxins that specifically create this damage. This is Peptide chain release factor homolog from Escherichia coli (strain ATCC 25922 / DSM 1103 / LMG 8223 / NCIMB 12210 / NCTC 12241 / WDCM 00013 / Seattle 1946).